The primary structure comprises 241 residues: Protein GrpE (241 aa).

Residues glutamine 28–phenylalanine 49 show a composition bias toward basic and acidic residues. A disordered region spans residues glutamine 28–lysine 78. Low complexity predominate over residues lysine 50–lysine 62.

Belongs to the GrpE family. Homodimer.

The protein localises to the cytoplasm. In terms of biological role, participates actively in the response to hyperosmotic and heat shock by preventing the aggregation of stress-denatured proteins, in association with DnaK and GrpE. It is the nucleotide exchange factor for DnaK and may function as a thermosensor. Unfolded proteins bind initially to DnaJ; upon interaction with the DnaJ-bound protein, DnaK hydrolyzes its bound ATP, resulting in the formation of a stable complex. GrpE releases ADP from DnaK; ATP binding to DnaK triggers the release of the substrate protein, thus completing the reaction cycle. Several rounds of ATP-dependent interactions between DnaJ, DnaK and GrpE are required for fully efficient folding. This is Protein GrpE from Aster yellows witches'-broom phytoplasma (strain AYWB).